Consider the following 83-residue polypeptide: Small ribosomal subunit protein uS17 (83 aa).

The protein belongs to the universal ribosomal protein uS17 family. As to quaternary structure, part of the 30S ribosomal subunit.

In terms of biological role, one of the primary rRNA binding proteins, it binds specifically to the 5'-end of 16S ribosomal RNA. This Buchnera aphidicola subsp. Acyrthosiphon pisum (strain 5A) protein is Small ribosomal subunit protein uS17.